Here is a 446-residue protein sequence, read N- to C-terminus: tRNA-2-methylthio-N(6)-dimethylallyladenosine synthase (446 aa).

The MTTase N-terminal domain occupies 2–122; that stretch reads KKAYVKSYGC…LPDLLRQSRE (121 aa). Residues Cys11, Cys47, Cys85, Cys157, Cys161, and Cys164 each coordinate [4Fe-4S] cluster. A Radical SAM core domain is found at 143–375; sequence RNRGVTGFLT…QDLLDRQRHA (233 aa). The 63-residue stretch at 378-440 folds into the TRAM domain; that stretch reads AASVGTLTEI…SNSLFGETLE (63 aa).

It belongs to the methylthiotransferase family. MiaB subfamily. As to quaternary structure, monomer. [4Fe-4S] cluster serves as cofactor.

It localises to the cytoplasm. The catalysed reaction is N(6)-dimethylallyladenosine(37) in tRNA + (sulfur carrier)-SH + AH2 + 2 S-adenosyl-L-methionine = 2-methylsulfanyl-N(6)-dimethylallyladenosine(37) in tRNA + (sulfur carrier)-H + 5'-deoxyadenosine + L-methionine + A + S-adenosyl-L-homocysteine + 2 H(+). Its function is as follows. Catalyzes the methylthiolation of N6-(dimethylallyl)adenosine (i(6)A), leading to the formation of 2-methylthio-N6-(dimethylallyl)adenosine (ms(2)i(6)A) at position 37 in tRNAs that read codons beginning with uridine. This Methylorubrum extorquens (strain PA1) (Methylobacterium extorquens) protein is tRNA-2-methylthio-N(6)-dimethylallyladenosine synthase.